A 417-amino-acid chain; its full sequence is Tyrosine--tRNA ligase (417 aa).

Tyr-39 contacts L-tyrosine. Positions 44-53 (ATATSLHIGN) match the 'HIGH' region motif. Positions 176 and 180 each coordinate L-tyrosine. The short motif at 236-240 (KMGKS) is the 'KMSKS' region element. Residue Lys-239 coordinates ATP. The S4 RNA-binding domain maps to 350-416 (IGILSLLVTA…GKKKHVLVRP (67 aa)).

This sequence belongs to the class-I aminoacyl-tRNA synthetase family. TyrS type 1 subfamily. Homodimer.

Its subcellular location is the cytoplasm. It catalyses the reaction tRNA(Tyr) + L-tyrosine + ATP = L-tyrosyl-tRNA(Tyr) + AMP + diphosphate + H(+). Functionally, catalyzes the attachment of tyrosine to tRNA(Tyr) in a two-step reaction: tyrosine is first activated by ATP to form Tyr-AMP and then transferred to the acceptor end of tRNA(Tyr). This Mesorhizobium japonicum (strain LMG 29417 / CECT 9101 / MAFF 303099) (Mesorhizobium loti (strain MAFF 303099)) protein is Tyrosine--tRNA ligase.